The following is a 71-amino-acid chain: Small ribosomal subunit protein bS18 (71 aa).

The protein belongs to the bacterial ribosomal protein bS18 family. In terms of assembly, part of the 30S ribosomal subunit. Forms a tight heterodimer with protein bS6.

Its function is as follows. Binds as a heterodimer with protein bS6 to the central domain of the 16S rRNA, where it helps stabilize the platform of the 30S subunit. This chain is Small ribosomal subunit protein bS18, found in Dichelobacter nodosus (strain VCS1703A).